Reading from the N-terminus, the 949-residue chain is Probable transcriptional regulatory protein STB4 (949 aa).

The zn(2)-C6 fungal-type DNA-binding region spans 87 to 113; the sequence is CELCKKRKVKCDGNNPCLNCSKHQKEC. 2 stretches are compositionally biased toward low complexity: residues 164–178 and 200–212; these read DGVS…NPNS and SGSN…NNNS. Disordered stretches follow at residues 164–214 and 862–888; these read DGVS…NSFP and GERE…ATRS. Over residues 862–874 the composition is skewed to basic and acidic residues; sequence GEREENADERQEN.

It is found in the nucleus. Its function is as follows. Binds to SIN3. This chain is Probable transcriptional regulatory protein STB4 (STB4), found in Saccharomyces cerevisiae (strain ATCC 204508 / S288c) (Baker's yeast).